The following is a 570-amino-acid chain: Keratin, type I cytoskeletal 10 (570 aa).

Residues 1–16 are compositionally biased toward low complexity; the sequence is MSVLYSSSSKQFSSSR. Residues 1 to 29 form a disordered region; the sequence is MSVLYSSSSKQFSSSRSGGGGGGGSVRVS. The tract at residues 1–143 is head; the sequence is MSVLYSSSSK…GDGGSLLSGN (143 aa). Phosphoserine is present on residues Ser-15 and Ser-17. Arg-32 carries the post-translational modification Asymmetric dimethylarginine; alternate. The residue at position 32 (Arg-32) is an Omega-N-methylarginine; alternate. Residues Ser-34, Ser-45, Ser-48, and Ser-168 each carry the phosphoserine modification. Residues 144–179 are coil 1A; that stretch reads GRVTMQNLNDRLASYMDKVRALEESNYELEGKIKEW. An IF rod domain is found at 144–458; that stretch reads GRVTMQNLND…SLLEGEGSSS (315 aa). The linker 1 stretch occupies residues 180–200; the sequence is YEKHGNSSQREPRDYSKYYKT. Residues 201-292 form a coil 1B region; that stretch reads IEDLKGQILT…KNHEEEMRDL (92 aa). The tract at residues 293–315 is linker 12; it reads QNVSTGDVNVEMNAAPGVDLTQL. Residues 316–454 form a coil 2 region; sequence LNNMRNQYEQ…QTYRSLLEGE (139 aa). Positions 451-570 are disordered; that stretch reads LEGEGSSSGG…GDQSSKGPRY (120 aa). The segment at 455 to 570 is tail; it reads GSSSGGGGGR…GDQSSKGPRY (116 aa). The span at 456–562 shows a compositional bias: gly residues; it reads SSSGGGGGRR…GGFKSSGGGD (107 aa).

The protein belongs to the intermediate filament family. (Microbial infection) Interacts (via C-terminal tail domain) with the S.aureus clumping factor, clfB; this interaction probably mediates S.aureus attachment to the highly keratinized squamous epithelial cells from the nasal cavity. In terms of assembly, heterotetramer of two type I and two type II keratins. Heterodimer with KRT1. Two heterodimers of KRT1 and KRT10 form a heterotetramer. The KRT10 subunit in the heterotetramer is probably disulfide-linked. Interacts with PLEC isoform 1C, when in a heterodimer with KRT1. As to quaternary structure, (Microbial infection) Interacts (via the C-terminal tail domain) with S.pneumoniae serine-rich repeat protein PsrP; this interaction probably mediates S.pneumoniae adherence to lung tissue and subsequent pathogenesis. Expressed in the suprabasal layers of the epidermis throughout the entire sole (at protein level). Expressed in the infundibular regions of the ear, the interscale regions of the tail, and the interfollicular epidermis of the back. Expressed in lung tissue from young mice (at protein level).

It localises to the secreted. Its subcellular location is the extracellular space. The protein resides in the cell surface. It is found in the cytoplasm. Functionally, plays a role in the establishment of the epidermal barrier on plantar skin. Involved in the maintenance of cell layer development and keratin filament bundles in suprabasal cells of the epithelium. (Microbial infection) Acts as a mediator of S.aureus adherence to desquamated nasal epithelial cells via clfB, and hence may play a role in nasal colonization. Its function is as follows. (Microbial infection) Binds S.pneumoniae PsrP, mediating adherence of the bacteria to lung cell lines. This is Keratin, type I cytoskeletal 10 (Krt10) from Mus musculus (Mouse).